A 181-amino-acid chain; its full sequence is TATA-box-binding protein (181 aa).

Repeat copies occupy residues 7 to 83 (IVNV…IKEL) and 98 to 173 (VQNM…SATL).

It belongs to the TBP family.

Its function is as follows. General factor that plays a role in the activation of archaeal genes transcribed by RNA polymerase. Binds specifically to the TATA box promoter element which lies close to the position of transcription initiation. In Methanococcus vannielii (strain ATCC 35089 / DSM 1224 / JCM 13029 / OCM 148 / SB), this protein is TATA-box-binding protein.